The following is a 1988-amino-acid chain: Protein Ycf2 (1988 aa).

Residue 1337 to 1344 participates in ATP binding; the sequence is GSIGTGRS. The segment at 1377 to 1396 is disordered; sequence SDDDSDDIDDSGDIDDSDDI.

The protein belongs to the Ycf2 family.

The protein localises to the plastid. The protein resides in the chloroplast stroma. In terms of biological role, probable ATPase of unknown function. Its presence in a non-photosynthetic plant (Epifagus virginiana) and experiments in tobacco indicate that it has an essential function which is probably not related to photosynthesis. This chain is Protein Ycf2, found in Cucumis sativus (Cucumber).